The primary structure comprises 623 residues: DELLA protein RHT-1 (623 aa).

The disordered stretch occupies residues 1 to 27; that stretch reads MKREYQDAGGSGGGGGGMGSSEDKMMV. The span at 9–19 shows a compositional bias: gly residues; it reads GGSGGGGGGMG. Residues 38–42 carry the DELLA motif motif; that stretch reads DELLA. Disordered regions lie at residues 109–138 and 159–201; these read LNAP…GYFD and AGAT…GARS. Pro residues predominate over residues 111–120; it reads APPPPLPPAP. Composition is skewed to low complexity over residues 121–131 and 181–201; these read QLNASTSSTVT and GGSS…GARS. Residues 225–619 form the GRAS domain; sequence VDTQEAGIRL…RPLIATSAWR (395 aa). Residues 232–288 are leucine repeat I (LRI); the sequence is IRLVHALLACAEAVQQENLSAAEALVKQIPLLAASQGGAMRKVAAYFGEALARRVFR. The LxCxE motif signature appears at 239 to 243; it reads LACAE. The interval 307-372 is VHIID; it reads HAHFYESCPY…GGPPSFRLTG (66 aa). Positions 338–342 match the VHIID motif; the sequence is VHVVD. Residues 386–425 form a leucine repeat II (LRII) region; that stretch reads QVGWKLAQFAHTIRVDFQYRGLVAATLADLEPFMLQPEGE. Residues 435-540 are PFYRE; that stretch reads IAVNSVFEMH…EVYLGRQICN (106 aa). Residues 543–619 form an SAW region; sequence ACEGAERTER…RPLIATSAWR (77 aa).

The protein belongs to the GRAS family. DELLA subfamily. Post-translationally, phosphorylated. Ubiquitinated. Upon GA application it is ubiquitinated, leading to its subsequent degradation.

The protein localises to the nucleus. Probable transcriptional regulator that acts as a repressor of the gibberellin (GA) signaling pathway. Probably acts by participating in large multiprotein complexes that repress transcription of GA-inducible genes. Upon GA application, it is degraded by the proteasome, allowing the GA signaling pathway. The polypeptide is DELLA protein RHT-1 (RHT1) (Triticum aestivum (Wheat)).